Here is a 131-residue protein sequence, read N- to C-terminus: Small ribosomal subunit protein bS6 (131 aa).

A disordered region spans residues 98 to 131 (EASPMVKAKDERRERRDDFANETADDADAGDSEE). Residues 104-116 (KAKDERRERRDDF) are compositionally biased toward basic and acidic residues. Residues 120 to 131 (TADDADAGDSEE) are compositionally biased toward acidic residues.

The protein belongs to the bacterial ribosomal protein bS6 family.

Its function is as follows. Binds together with bS18 to 16S ribosomal RNA. This is Small ribosomal subunit protein bS6 from Citrobacter koseri (strain ATCC BAA-895 / CDC 4225-83 / SGSC4696).